Reading from the N-terminus, the 210-residue chain is Thiamine-phosphate synthase (210 aa).

Residues 36–40 (QLREK) and Asn68 each bind 4-amino-2-methyl-5-(diphosphooxymethyl)pyrimidine. Residues Asp69 and Asp88 each coordinate Mg(2+). Ser107 serves as a coordination point for 4-amino-2-methyl-5-(diphosphooxymethyl)pyrimidine. 133–135 (TGS) contacts 2-[(2R,5Z)-2-carboxy-4-methylthiazol-5(2H)-ylidene]ethyl phosphate. Residue Lys136 coordinates 4-amino-2-methyl-5-(diphosphooxymethyl)pyrimidine. 2-[(2R,5Z)-2-carboxy-4-methylthiazol-5(2H)-ylidene]ethyl phosphate contacts are provided by residues Gly164 and 184 to 185 (IS).

Belongs to the thiamine-phosphate synthase family. Requires Mg(2+) as cofactor.

It carries out the reaction 2-[(2R,5Z)-2-carboxy-4-methylthiazol-5(2H)-ylidene]ethyl phosphate + 4-amino-2-methyl-5-(diphosphooxymethyl)pyrimidine + 2 H(+) = thiamine phosphate + CO2 + diphosphate. It catalyses the reaction 2-(2-carboxy-4-methylthiazol-5-yl)ethyl phosphate + 4-amino-2-methyl-5-(diphosphooxymethyl)pyrimidine + 2 H(+) = thiamine phosphate + CO2 + diphosphate. The catalysed reaction is 4-methyl-5-(2-phosphooxyethyl)-thiazole + 4-amino-2-methyl-5-(diphosphooxymethyl)pyrimidine + H(+) = thiamine phosphate + diphosphate. It functions in the pathway cofactor biosynthesis; thiamine diphosphate biosynthesis; thiamine phosphate from 4-amino-2-methyl-5-diphosphomethylpyrimidine and 4-methyl-5-(2-phosphoethyl)-thiazole: step 1/1. Functionally, condenses 4-methyl-5-(beta-hydroxyethyl)thiazole monophosphate (THZ-P) and 2-methyl-4-amino-5-hydroxymethyl pyrimidine pyrophosphate (HMP-PP) to form thiamine monophosphate (TMP). This chain is Thiamine-phosphate synthase, found in Moorella thermoacetica (strain ATCC 39073 / JCM 9320).